Consider the following 238-residue polypeptide: MKKYIVSIGVDISDNDVKTNPKVNELVNKEIKKRLSKLGIKATISNITGDDIVITSFVPENLIEKNNKIIFEVLNKYAEGFDDLRGISEDKDKAGEGLSYAIAESISEYGDAIIIAFDTYGGESFVDEMALFVKEIGEKFGYDVGCSVSNEPIEIPGIGYTGAESDDPVVVITVEELDDIPKLAGLIYGGLLSFDKLYFVKNGDEVNILPPGVIYTMTAFLNGNVIDLYGGIRRKIKF.

This sequence to M.thermoautotrophicum MTH564.

This is an uncharacterized protein from Methanocaldococcus jannaschii (strain ATCC 43067 / DSM 2661 / JAL-1 / JCM 10045 / NBRC 100440) (Methanococcus jannaschii).